Consider the following 254-residue polypeptide: 5'-methylthioadenosine/S-adenosylhomocysteine nucleosidase (254 aa).

M1 bears the N-acetylmethionine mark. E25 functions as the Proton acceptor in the catalytic mechanism. S-methyl-5'-thioadenosine-binding positions include T103 and 186–189 (KDME). The adenine site is built by K186 and D212. D212 (proton donor) is an active-site residue.

This sequence belongs to the PNP/UDP phosphorylase family. MtnN subfamily. As to quaternary structure, homodimer.

The catalysed reaction is S-methyl-5'-thioadenosine + H2O = 5-(methylsulfanyl)-D-ribose + adenine. It catalyses the reaction S-adenosyl-L-homocysteine + H2O = S-(5-deoxy-D-ribos-5-yl)-L-homocysteine + adenine. It carries out the reaction 5'-deoxyadenosine + H2O = 5-deoxy-D-ribose + adenine. It participates in amino-acid biosynthesis; L-methionine biosynthesis via salvage pathway; S-methyl-5-thio-alpha-D-ribose 1-phosphate from S-methyl-5'-thioadenosine (hydrolase route): step 1/2. Functionally, enzyme of the methionine cycle that catalyzes the irreversible cleavage of the glycosidic bond in 5'-methylthioadenosine (MTA) and S-adenosylhomocysteine (SAH/AdoHcy) to a lesser extent, to adenine and the corresponding thioribose, 5'-methylthioribose and S-ribosylhomocysteine, respectively. Contributes to the maintenance of AdoMet homeostasis and is required to sustain high rates of ethylene synthesis. The chain is 5'-methylthioadenosine/S-adenosylhomocysteine nucleosidase (MTN2) from Arabidopsis thaliana (Mouse-ear cress).